The sequence spans 499 residues: Cysteine--tRNA ligase (499 aa).

Cys31 is a Zn(2+) binding site. Residues 33 to 43 (VTVYDLCHLGH) carry the 'HIGH' region motif. Residues Cys215, His240, and Glu244 each coordinate Zn(2+). Residues 272 to 276 (KMSKS) carry the 'KMSKS' region motif. Lys275 serves as a coordination point for ATP.

This sequence belongs to the class-I aminoacyl-tRNA synthetase family. In terms of assembly, monomer. Requires Zn(2+) as cofactor.

It localises to the cytoplasm. It catalyses the reaction tRNA(Cys) + L-cysteine + ATP = L-cysteinyl-tRNA(Cys) + AMP + diphosphate. The sequence is that of Cysteine--tRNA ligase from Synechococcus sp. (strain WH7803).